A 369-amino-acid polypeptide reads, in one-letter code: Olfactory receptor 2T1 (369 aa).

At 1 to 76 (MWQEYYFLNV…LFNRKETSGL (76 aa)) the chain is on the extracellular side. Residue Asn-56 is glycosylated (N-linked (GlcNAc...) asparagine). The helical transmembrane segment at 77–97 (IFAIISIIFFTALMANGVMIF) threads the bilayer. The Cytoplasmic segment spans residues 98–107 (LIQTDLRLHT). Residues 108 to 128 (PMYFLLSHLSLIDMMYISTIV) form a helical membrane-spanning segment. Topologically, residues 129–148 (PKMLVNYLLDQRTISFVGCT) are extracellular. Cys-147 and Cys-239 form a disulfide bridge. Residues 149-169 (AQHFLYLTLVGAEFFLLGLMA) form a helical membrane-spanning segment. The Cytoplasmic portion of the chain corresponds to 170 to 191 (YDRYVAICNPLRYPVLMSRRVC). The chain crosses the membrane as a helical span at residues 192 to 212 (WMIIAGSWFGGSLDGFLLTPI). At 213–247 (TMSFPFCNSREINHFFCEAPAVLKLACADTALYET) the chain is on the extracellular side. The helical transmembrane segment at 248-268 (VMYVCCVLMLLIPFSVVLASY) threads the bilayer. Residues 269–286 (ARILTTVQCMSSVEGRKK) are Cytoplasmic-facing. Residues 287–307 (AFATCSSHMTVVSLFYGAAMY) traverse the membrane as a helical segment. Topologically, residues 308 to 321 (TYMLPHSYHKPAQD) are extracellular. A helical membrane pass occupies residues 322 to 342 (KVLSVFYTILTPMLNPLIYSL). The Cytoplasmic portion of the chain corresponds to 343-369 (RNKDVTGALKRALGRFKGPQRVSGGVF).

Belongs to the G-protein coupled receptor 1 family.

It is found in the cell membrane. Functionally, odorant receptor. In Homo sapiens (Human), this protein is Olfactory receptor 2T1 (OR2T1).